The chain runs to 348 residues: Ketol-acid reductoisomerase (NADP(+)) (348 aa).

Residues 2-182 (AKTYYDHDAD…GCTRAGVLET (181 aa)) form the KARI N-terminal Rossmann domain. NADP(+) is bound by residues 25 to 28 (YGSQ), Ser-51, Ser-53, and 83 to 86 (DTAQ). His-108 is an active-site residue. Gly-134 provides a ligand contact to NADP(+). Residues 183 to 328 (TFKEETETDL…EKLRAAMPFL (146 aa)) enclose the KARI C-terminal knotted domain. Positions 191, 195, 227, and 231 each coordinate Mg(2+). Position 252 (Ser-252) interacts with substrate.

Belongs to the ketol-acid reductoisomerase family. Requires Mg(2+) as cofactor.

It carries out the reaction (2R)-2,3-dihydroxy-3-methylbutanoate + NADP(+) = (2S)-2-acetolactate + NADPH + H(+). The catalysed reaction is (2R,3R)-2,3-dihydroxy-3-methylpentanoate + NADP(+) = (S)-2-ethyl-2-hydroxy-3-oxobutanoate + NADPH + H(+). The protein operates within amino-acid biosynthesis; L-isoleucine biosynthesis; L-isoleucine from 2-oxobutanoate: step 2/4. It functions in the pathway amino-acid biosynthesis; L-valine biosynthesis; L-valine from pyruvate: step 2/4. Involved in the biosynthesis of branched-chain amino acids (BCAA). Catalyzes an alkyl-migration followed by a ketol-acid reduction of (S)-2-acetolactate (S2AL) to yield (R)-2,3-dihydroxy-isovalerate. In the isomerase reaction, S2AL is rearranged via a Mg-dependent methyl migration to produce 3-hydroxy-3-methyl-2-ketobutyrate (HMKB). In the reductase reaction, this 2-ketoacid undergoes a metal-dependent reduction by NADPH to yield (R)-2,3-dihydroxy-isovalerate. This chain is Ketol-acid reductoisomerase (NADP(+)), found in Acidobacterium capsulatum (strain ATCC 51196 / DSM 11244 / BCRC 80197 / JCM 7670 / NBRC 15755 / NCIMB 13165 / 161).